Here is a 275-residue protein sequence, read N- to C-terminus: Lincomycin biosynthesis protein LmbN (275 aa).

The Carrier domain maps to 1-78 (MSTLDEVLAL…AIAATVARIT (78 aa)). O-(pantetheine 4'-phosphoryl)serine is present on Ser37. In terms of domain architecture, SIS spans 113–275 (LFDTWHAGGT…HHALCVAHAP (163 aa)).

It functions in the pathway antibiotic biosynthesis; lincomycin biosynthesis. The sequence is that of Lincomycin biosynthesis protein LmbN (lmbN) from Streptomyces lincolnensis.